A 476-amino-acid chain; its full sequence is MSPQTETKASVGFKAGVKDYRLTYYTPEYETKDTDILAAFRVSPQPGVPPEEAGAAVAAESSTGTWTTVWTDGLTSLDRYKGRCYHIEPVPGEDSQWICYVAYPLDLFEEGSVTNMFTSIVGNVFGFKALRALRLEDLRIPPTYSKTFQGPPHGIQVERDKLNKYGRPLLGCTIKPKLGLSAKNYGRACYECLRGGLDFTKDDENVNSQPFMRWRDRFVFCAEAIYKSQAETGEIKGHYLNATAGTCEEMMKRAVFARELGVPIVMHDYLTGGFTANTTLAHYCRDNGLLLHIHRAMHAVIDRQKNHGMHFRVLAKALRMSGGDHIHAGTVVGKLEGEREITLGFVDLLRDDFIEKDRARGIFFTQDWVSMPGVIPVASGGIHVWHMPALTEIFGDDSVLQFGGGTLGHPWGNAPGAAANRVALEACVQARNEGRDLAREGNEIIRAACKWSPELAAACEVWKAIKFEFAPVDTID.

A propeptide spanning residues 1-2 is cleaved from the precursor; that stretch reads MS. An N-acetylproline modification is found at Pro3. Residue Lys14 is modified to N6,N6,N6-trimethyllysine. Substrate is bound by residues Asn123 and Thr173. The active-site Proton acceptor is the Lys175. Lys177 contributes to the substrate binding site. Mg(2+) is bound by residues Lys201, Asp203, and Glu204. Lys201 is modified (N6-carboxylysine). His294 functions as the Proton acceptor in the catalytic mechanism. Substrate is bound by residues Arg295, His327, and Ser379.

This sequence belongs to the RuBisCO large chain family. Type I subfamily. As to quaternary structure, heterohexadecamer of 8 large chains and 8 small chains; disulfide-linked. The disulfide link is formed within the large subunit homodimers. Mg(2+) is required as a cofactor. Post-translationally, the disulfide bond which can form in the large chain dimeric partners within the hexadecamer appears to be associated with oxidative stress and protein turnover.

Its subcellular location is the plastid. The protein localises to the chloroplast. It catalyses the reaction 2 (2R)-3-phosphoglycerate + 2 H(+) = D-ribulose 1,5-bisphosphate + CO2 + H2O. The enzyme catalyses D-ribulose 1,5-bisphosphate + O2 = 2-phosphoglycolate + (2R)-3-phosphoglycerate + 2 H(+). In terms of biological role, ruBisCO catalyzes two reactions: the carboxylation of D-ribulose 1,5-bisphosphate, the primary event in carbon dioxide fixation, as well as the oxidative fragmentation of the pentose substrate in the photorespiration process. Both reactions occur simultaneously and in competition at the same active site. The polypeptide is Ribulose bisphosphate carboxylase large chain (Brachypodium distachyon (Purple false brome)).